The sequence spans 248 residues: 3-deoxy-manno-octulosonate cytidylyltransferase (248 aa).

Belongs to the KdsB family.

It localises to the cytoplasm. It carries out the reaction 3-deoxy-alpha-D-manno-oct-2-ulosonate + CTP = CMP-3-deoxy-beta-D-manno-octulosonate + diphosphate. Its pathway is nucleotide-sugar biosynthesis; CMP-3-deoxy-D-manno-octulosonate biosynthesis; CMP-3-deoxy-D-manno-octulosonate from 3-deoxy-D-manno-octulosonate and CTP: step 1/1. It participates in bacterial outer membrane biogenesis; lipopolysaccharide biosynthesis. Activates KDO (a required 8-carbon sugar) for incorporation into bacterial lipopolysaccharide in Gram-negative bacteria. In Salmonella enteritidis PT4 (strain P125109), this protein is 3-deoxy-manno-octulosonate cytidylyltransferase.